A 203-amino-acid polypeptide reads, in one-letter code: GTP cyclohydrolase-2 (203 aa).

Residue 49–53 (RIHSE) participates in GTP binding. Cysteine 54, cysteine 65, and cysteine 67 together coordinate Zn(2+). GTP-binding positions include glutamine 70, 92-94 (EGR), and threonine 114. Aspartate 126 acts as the Proton acceptor in catalysis. The active-site Nucleophile is the arginine 128. GTP is bound by residues threonine 149 and lysine 154.

It belongs to the GTP cyclohydrolase II family. Zn(2+) is required as a cofactor.

It catalyses the reaction GTP + 4 H2O = 2,5-diamino-6-hydroxy-4-(5-phosphoribosylamino)-pyrimidine + formate + 2 phosphate + 3 H(+). The protein operates within cofactor biosynthesis; riboflavin biosynthesis; 5-amino-6-(D-ribitylamino)uracil from GTP: step 1/4. Its function is as follows. Catalyzes the conversion of GTP to 2,5-diamino-6-ribosylamino-4(3H)-pyrimidinone 5'-phosphate (DARP), formate and pyrophosphate. The protein is GTP cyclohydrolase-2 of Shewanella sp. (strain W3-18-1).